A 418-amino-acid polypeptide reads, in one-letter code: L-rhamnose isomerase (418 aa).

Mn(2+)-binding residues include His-262, Asp-294, and Asp-296.

It belongs to the rhamnose isomerase family. Mn(2+) serves as cofactor.

It is found in the cytoplasm. It catalyses the reaction L-rhamnopyranose = L-rhamnulose. It participates in carbohydrate degradation; L-rhamnose degradation; glycerone phosphate from L-rhamnose: step 1/3. Its function is as follows. Catalyzes the interconversion of L-rhamnose and L-rhamnulose. In Bacteroides thetaiotaomicron (strain ATCC 29148 / DSM 2079 / JCM 5827 / CCUG 10774 / NCTC 10582 / VPI-5482 / E50), this protein is L-rhamnose isomerase.